We begin with the raw amino-acid sequence, 387 residues long: 3-ketoacyl-CoA thiolase (387 aa).

The active-site Acyl-thioester intermediate is C91. Residues H343 and C373 each act as proton acceptor in the active site.

It belongs to the thiolase-like superfamily. Thiolase family. In terms of assembly, heterotetramer of two alpha chains (FadB) and two beta chains (FadA).

The protein localises to the cytoplasm. The enzyme catalyses an acyl-CoA + acetyl-CoA = a 3-oxoacyl-CoA + CoA. It participates in lipid metabolism; fatty acid beta-oxidation. In terms of biological role, catalyzes the final step of fatty acid oxidation in which acetyl-CoA is released and the CoA ester of a fatty acid two carbons shorter is formed. In Shewanella baltica (strain OS185), this protein is 3-ketoacyl-CoA thiolase.